A 162-amino-acid polypeptide reads, in one-letter code: Methyl-coenzyme M reductase II operon protein D (162 aa).

In terms of assembly, MCR is composed of three subunits: alpha, beta, and gamma. The function of protein D is not known.

This is Methyl-coenzyme M reductase II operon protein D (mrtD) from Methanothermobacter thermautotrophicus (strain ATCC 29096 / DSM 1053 / JCM 10044 / NBRC 100330 / Delta H) (Methanobacterium thermoautotrophicum).